Reading from the N-terminus, the 473-residue chain is FAD-dependent oxidoreductase dpchF (473 aa).

An N-terminal signal peptide occupies residues 1–21; it reads MKLSFIASPVWALALAQFAAA. Residues Asn-98, Asn-128, Asn-181, Asn-262, and Asn-330 are each glycosylated (N-linked (GlcNAc...) asparagine).

Belongs to the beta-cyclopiazonate dehydrogenase family. The cofactor is FAD.

The protein operates within secondary metabolite biosynthesis; terpenoid biosynthesis. Functionally, FAD-dependent oxidoreductase; part of the gene cluster that mediates the biosynthesis of the diterpenoid pyrones higginsianins A and B. The first step of the pathway is the synthesis of the alpha-pyrone moiety by the polyketide synthase dpchA via condensation of one acetyl-CoA starter unit with 3 malonyl-CoA units and 2 methylations. The alpha-pyrone is then combined with geranylgeranyl pyrophosphate (GGPP) formed by the GGPP synthase dpchD through the action of the prenyltransferase dpchC to yield a linear alpha-pyrone diterpenoid. Subsequent steps in the diterpenoid pyrone biosynthetic pathway involve the decalin core formation, which is initiated by the epoxidation of the C10-C11 olefin by the FAD-dependent oxidoreductase dpchE, and is followed by a cyclization cascade catalyzed by the terpene cyclase dpchB. The short chain dehydrogenase/reductase dpchG then oxidizes the 8S hydroxy group to a ketone and the short chain dehydrogenase/reductase dpchH reduces the ketone to the 8R hydroxy group to yield higginsianin B. Finally, the FAD-dependent oxidoreductase dpchF converts higginsianin B into higginsianin A. The chain is FAD-dependent oxidoreductase dpchF from Colletotrichum higginsianum (strain IMI 349063) (Crucifer anthracnose fungus).